The following is a 685-amino-acid chain: Amino acid transporter heavy chain SLC3A1 (685 aa).

Residues 1-10 are compositionally biased toward basic and acidic residues; it reads MDEDKGKRDP. A disordered region spans residues 1-53; it reads MDEDKGKRDPIQMSLKGCRTNNGFVQNEDIPEQDPDPGSRDTPQPNAVSIPAP. Over 1–88 the chain is Cytoplasmic; it reads MDEDKGKRDP…ARYRVPREIL (88 aa). A helical; Signal-anchor for type II membrane protein transmembrane segment spans residues 89 to 109; that stretch reads FWLTVVSVFLLIGATIAIIVI. Residues 110-685 are Extracellular-facing; it reads SPKCLDWWQA…SALDILYSSC (576 aa). N213 contacts Ca(2+). N-linked (GlcNAc...) asparagine glycans are attached at residues N213, N240, and N260. C241 and C272 are oxidised to a cystine. Residues D283, F317, L318, and E320 each contribute to the Ca(2+) site. The N-linked (GlcNAc...) asparagine glycan is linked to N331. S385 carries the phosphoserine modification. N512 and N522 each carry an N-linked (GlcNAc...) asparagine glycan. 2 disulfides stabilise this stretch: C570/C666 and C673/C685.

Disulfide-linked heterodimer composed of the catalytic light subunit SLC7A9 and the heavy subunit SLC3A1. The heterodimer is the minimal functional unit. Assembles in non-covalently linked heterotetramers (dimers of heterodimers) and higher order oligomers; the oligomerization is mediated by SLC3A1 likely to prevent degradation in the endoplasmic reticulum and facilitate heteromer trafficking to the plasma membrane. Disulfide-linked heterodimer composed of the catalytic light subunit SLC7A13 and the heavy subunit SLC3A1. In terms of tissue distribution, expressed in the brush border membrane in the kidney (at protein level). Highly expressed in renal tubules in the outer stripe of the outer medulla and medullary ray (at protein level). Also detected in the renal cortex. More abundant in male than female kidneys.

The protein resides in the cell membrane. It localises to the apical cell membrane. Functionally, acts as a chaperone that facilitates biogenesis and trafficking of functional transporter heteromers to the plasma membrane. Associates with SLC7A9 to form a functional transporter complex that mediates the electrogenic exchange between cationic amino acids and neutral amino acids, with a stoichiometry of 1:1. SLC7A9-SLC3A1 transporter has system b(0,+)-like activity with high affinity for extracellular cationic amino acids and L-cystine and lower affinity for intracellular neutral amino acids. Substrate exchange is driven by high concentration of intracellular neutral amino acids and the intracellular reduction of L-cystine to L-cysteine. SLC7A9-SLC3A1 acts as a major transporter for reabsorption of L-cystine and dibasic amino acids across the brush border membrane in early proximal tubules. Associates with SLC7A13 to form a functional complex that transports anionic and neutral amino acids via exchange or facilitated diffusion. SLC7A13-SLC3A1 may act as a major transporter for L-cystine in late proximal tubules, ensuring its reabsorption from the luminal fluid in exchange for cytosolic L-glutamate or L-aspartate. This is Amino acid transporter heavy chain SLC3A1 from Mus musculus (Mouse).